Consider the following 396-residue polypeptide: Tyrosine--tRNA ligase (396 aa).

Tyr-36 serves as a coordination point for L-tyrosine. The 'HIGH' region motif lies at 41-50 (PTANSLHIGN). L-tyrosine contacts are provided by Tyr-165 and Gln-169. Positions 225–229 (KMGKT) match the 'KMSKS' region motif. Lys-228 provides a ligand contact to ATP. Residues 331-394 (TNLIDYLVET…KKSFLTIKTV (64 aa)) form the S4 RNA-binding domain.

This sequence belongs to the class-I aminoacyl-tRNA synthetase family. TyrS type 1 subfamily. In terms of assembly, homodimer.

It localises to the cytoplasm. It catalyses the reaction tRNA(Tyr) + L-tyrosine + ATP = L-tyrosyl-tRNA(Tyr) + AMP + diphosphate + H(+). Catalyzes the attachment of tyrosine to tRNA(Tyr) in a two-step reaction: tyrosine is first activated by ATP to form Tyr-AMP and then transferred to the acceptor end of tRNA(Tyr). This Mycoplasma genitalium (strain ATCC 33530 / DSM 19775 / NCTC 10195 / G37) (Mycoplasmoides genitalium) protein is Tyrosine--tRNA ligase.